The sequence spans 194 residues: Leucyl/phenylalanyl-tRNA--protein transferase (194 aa).

The protein belongs to the L/F-transferase family.

It localises to the cytoplasm. The catalysed reaction is N-terminal L-lysyl-[protein] + L-leucyl-tRNA(Leu) = N-terminal L-leucyl-L-lysyl-[protein] + tRNA(Leu) + H(+). It catalyses the reaction N-terminal L-arginyl-[protein] + L-leucyl-tRNA(Leu) = N-terminal L-leucyl-L-arginyl-[protein] + tRNA(Leu) + H(+). The enzyme catalyses L-phenylalanyl-tRNA(Phe) + an N-terminal L-alpha-aminoacyl-[protein] = an N-terminal L-phenylalanyl-L-alpha-aminoacyl-[protein] + tRNA(Phe). Functions in the N-end rule pathway of protein degradation where it conjugates Leu, Phe and, less efficiently, Met from aminoacyl-tRNAs to the N-termini of proteins containing an N-terminal arginine or lysine. The sequence is that of Leucyl/phenylalanyl-tRNA--protein transferase from Chlorobaculum parvum (strain DSM 263 / NCIMB 8327) (Chlorobium vibrioforme subsp. thiosulfatophilum).